A 458-amino-acid polypeptide reads, in one-letter code: MSTGKIIQVIGAVIDVEFARDNTPKVYDALNVVEAGLVLEVQQQIGDGVVRTIAMGSSDGLRRGMEVKNTNAPISVPVGHGTLGRIMNVLGEPIDEAGPIEYTEKRSIHQAPPAYDELALSTEILETGIKVVDLICPFAKGGKVGLFGGAGVGKTVTMMELINNIAKEHSGYSVFAGVGERTREGNDFYYEMKDSNVLDKVSLVYGQMNEPPGNRLRVALSGLTIAEGFRDEKRDVLMFIDNIYRYTLAGTEVSALLGRMPSAVGYQPTLAAEMGALQERITSTKTGSITSVQAVYVPADDLTDPSPATTFSHLDATIVLSRQIAELGIYPAVDPLDSTSRQLDPLVVGQEHYETARAVQKVLQRYKELKDIIAILGMDELSDEDKKIVDRARKIQRFLSQPFHVAEVFTGNPGKFVSLKDTVASFKAIVNGEYDHLPEQAFYMVGSIQEAIEKAKTL.

148–155 (GGAGVGKT) provides a ligand contact to ATP.

This sequence belongs to the ATPase alpha/beta chains family. In terms of assembly, F-type ATPases have 2 components, CF(1) - the catalytic core - and CF(0) - the membrane proton channel. CF(1) has five subunits: alpha(3), beta(3), gamma(1), delta(1), epsilon(1). CF(0) has three main subunits: a(1), b(2) and c(9-12). The alpha and beta chains form an alternating ring which encloses part of the gamma chain. CF(1) is attached to CF(0) by a central stalk formed by the gamma and epsilon chains, while a peripheral stalk is formed by the delta and b chains.

The protein resides in the cell inner membrane. It catalyses the reaction ATP + H2O + 4 H(+)(in) = ADP + phosphate + 5 H(+)(out). Produces ATP from ADP in the presence of a proton gradient across the membrane. The catalytic sites are hosted primarily by the beta subunits. This is ATP synthase subunit beta from Francisella tularensis subsp. novicida (strain U112).